The sequence spans 151 residues: Large ribosomal subunit protein uL13 (151 aa).

It belongs to the universal ribosomal protein uL13 family. As to quaternary structure, part of the 50S ribosomal subunit.

This protein is one of the early assembly proteins of the 50S ribosomal subunit, although it is not seen to bind rRNA by itself. It is important during the early stages of 50S assembly. This chain is Large ribosomal subunit protein uL13, found in Nostoc sp. (strain PCC 7120 / SAG 25.82 / UTEX 2576).